Here is a 723-residue protein sequence, read N- to C-terminus: Ribosome quality control complex subunit 1 (723 aa).

Residues 21 to 125 form a disordered region; the sequence is SNSNANKMTS…DKGSDDDDDD (105 aa). Polar residues predominate over residues 27 to 37; it reads KMTSGKSTAGN. Over residues 93-108 the composition is skewed to basic residues; that stretch reads SSRRKKNKKAKRKQKN. Positions 109–118 are enriched in basic and acidic residues; that stretch reads HTAEAAKDKG. A Phosphoserine modification is found at serine 119. Threonine 158 is subject to Phosphothreonine. Phosphoserine is present on serine 160.

This sequence belongs to the TCF25 family. Component of the ribosome quality control complex (RQC), composed of the E3 ubiquitin ligase RKR1/LTN1, RQC1 and RQC2, as well as CDC48 and its ubiquitin-binding cofactors. RQC forms a stable complex with 60S ribosomal subunits.

The protein localises to the cytoplasm. Functionally, component of the ribosome quality control complex (RQC), a ribosome-associated complex that mediates ubiquitination and extraction of incompletely synthesized nascent chains for proteasomal degradation. Within the RQC complex, RQC1 is essential for the recruitment of CDC48 to incompletely synthesized nascent polypeptides that are ubiquitinated by RKR1/LTN1. The sequence is that of Ribosome quality control complex subunit 1 from Saccharomyces cerevisiae (strain ATCC 204508 / S288c) (Baker's yeast).